Reading from the N-terminus, the 361-residue chain is Large ribosomal subunit protein uL3 (361 aa).

The interval 339–361 is disordered; that stretch reads RPPKKKPPVQRPQITYVSVESKQ. The segment covering 350–361 has biased composition (polar residues); the sequence is PQITYVSVESKQ.

It belongs to the universal ribosomal protein uL3 family. Part of the 50S ribosomal subunit. Forms a cluster with proteins L14 and L24e.

Functionally, one of the primary rRNA binding proteins, it binds directly near the 3'-end of the 23S rRNA, where it nucleates assembly of the 50S subunit. In Pyrococcus abyssi (strain GE5 / Orsay), this protein is Large ribosomal subunit protein uL3.